Consider the following 274-residue polypeptide: Formamidopyrimidine-DNA glycosylase (274 aa).

The Schiff-base intermediate with DNA role is filled by proline 2. Glutamate 3 acts as the Proton donor in catalysis. Lysine 56 (proton donor; for beta-elimination activity) is an active-site residue. Positions 89, 107, and 148 each coordinate DNA. The FPG-type zinc finger occupies leucine 233 to proline 267. Arginine 257 functions as the Proton donor; for delta-elimination activity in the catalytic mechanism.

This sequence belongs to the FPG family. As to quaternary structure, monomer. It depends on Zn(2+) as a cofactor.

The catalysed reaction is Hydrolysis of DNA containing ring-opened 7-methylguanine residues, releasing 2,6-diamino-4-hydroxy-5-(N-methyl)formamidopyrimidine.. It catalyses the reaction 2'-deoxyribonucleotide-(2'-deoxyribose 5'-phosphate)-2'-deoxyribonucleotide-DNA = a 3'-end 2'-deoxyribonucleotide-(2,3-dehydro-2,3-deoxyribose 5'-phosphate)-DNA + a 5'-end 5'-phospho-2'-deoxyribonucleoside-DNA + H(+). In terms of biological role, involved in base excision repair of DNA damaged by oxidation or by mutagenic agents. Acts as a DNA glycosylase that recognizes and removes damaged bases. Has a preference for oxidized purines, such as 7,8-dihydro-8-oxoguanine (8-oxoG). Has AP (apurinic/apyrimidinic) lyase activity and introduces nicks in the DNA strand. Cleaves the DNA backbone by beta-delta elimination to generate a single-strand break at the site of the removed base with both 3'- and 5'-phosphates. This is Formamidopyrimidine-DNA glycosylase from Acinetobacter baumannii (strain SDF).